A 356-amino-acid polypeptide reads, in one-letter code: NADH-quinone oxidoreductase subunit H (356 aa).

Helical transmembrane passes span 4-24, 79-99, 127-147, 166-186, 198-218, 251-271, 289-309, and 329-349; these read ALIL…LTGV, LLAP…IPFG, GVLY…IAGW, ISYE…TGSL, MWNI…TAMF, FFLA…LLFF, FIGL…FIWV, and MIPW…YWKE.

This sequence belongs to the complex I subunit 1 family. In terms of assembly, NDH-1 is composed of 14 different subunits. Subunits NuoA, H, J, K, L, M, N constitute the membrane sector of the complex.

The protein resides in the cell inner membrane. It carries out the reaction a quinone + NADH + 5 H(+)(in) = a quinol + NAD(+) + 4 H(+)(out). NDH-1 shuttles electrons from NADH, via FMN and iron-sulfur (Fe-S) centers, to quinones in the respiratory chain. The immediate electron acceptor for the enzyme in this species is believed to be ubiquinone. Couples the redox reaction to proton translocation (for every two electrons transferred, four hydrogen ions are translocated across the cytoplasmic membrane), and thus conserves the redox energy in a proton gradient. This subunit may bind ubiquinone. The polypeptide is NADH-quinone oxidoreductase subunit H (Leptospira biflexa serovar Patoc (strain Patoc 1 / ATCC 23582 / Paris)).